We begin with the raw amino-acid sequence, 1018 residues long: Inner centromere protein pic1 (1018 aa).

At Ser171 the chain carries Phosphoserine. Disordered stretches follow at residues 184–207, 247–287, 306–365, 522–556, 570–756, 781–813, 848–867, and 877–944; these read VPLR…PKQK, RTKD…SSSP, AKES…PPEI, TRKS…LPPS, EPLH…TSKP, EPDS…EDRK, TKQN…SQSN, and HAPA…LPSW. Composition is skewed to polar residues over residues 189–199 and 268–287; these read TSPSPSETADS and PSTT…SSSP. Residues 309-320 are compositionally biased toward low complexity; it reads SLTSSTRLSTSY. 2 stretches are compositionally biased toward polar residues: residues 329–339 and 522–554; these read VAFSSETVTSS and TRKS…SSLP. Basic and acidic residues-rich tracts occupy residues 570–580 and 624–644; these read EPLHDDSRQNS and RSSE…RELS. The segment covering 645 to 664 has biased composition (polar residues); it reads NNEFPSRQTKTVTSANSSNI. 2 stretches are compositionally biased toward basic and acidic residues: residues 665 to 679 and 692 to 702; these read RDME…RSEP and KPFEEKSEKPT. Polar residues-rich tracts occupy residues 705 to 719 and 784 to 808; these read RLVT…SWHS and SVTS…TNSQ. Positions 890 to 902 are enriched in low complexity; sequence PSSKSPLLKTPKS.

This sequence belongs to the INCENP family. As to quaternary structure, component of the CPC complex at least composed of ark1, bir1 and pic1.

It is found in the nucleus. The protein localises to the cytoplasm. It localises to the cytoskeleton. Its subcellular location is the spindle. Component of the chromosomal passenger complex (CPC), a complex that acts as a key regulator of mitosis. Has a role in sister chromatid cohesion and condensation. This chain is Inner centromere protein pic1 (pic1), found in Schizosaccharomyces pombe (strain 972 / ATCC 24843) (Fission yeast).